Reading from the N-terminus, the 599-residue chain is Aspartate--tRNA(Asp/Asn) ligase (599 aa).

Residue Glu-174 coordinates L-aspartate. The interval 198 to 201 is aspartate; the sequence is QLFK. Arg-220 serves as a coordination point for L-aspartate. ATP contacts are provided by residues 220 to 222 and Gln-229; that span reads RDE. His-457 is a binding site for L-aspartate. An ATP-binding site is contributed by Glu-491. Arg-498 lines the L-aspartate pocket. 543–546 provides a ligand contact to ATP; it reads GLDR.

The protein belongs to the class-II aminoacyl-tRNA synthetase family. Type 1 subfamily. In terms of assembly, homodimer.

The protein resides in the cytoplasm. The catalysed reaction is tRNA(Asx) + L-aspartate + ATP = L-aspartyl-tRNA(Asx) + AMP + diphosphate. Its function is as follows. Aspartyl-tRNA synthetase with relaxed tRNA specificity since it is able to aspartylate not only its cognate tRNA(Asp) but also tRNA(Asn). Reaction proceeds in two steps: L-aspartate is first activated by ATP to form Asp-AMP and then transferred to the acceptor end of tRNA(Asp/Asn). The protein is Aspartate--tRNA(Asp/Asn) ligase of Paraburkholderia phytofirmans (strain DSM 17436 / LMG 22146 / PsJN) (Burkholderia phytofirmans).